A 265-amino-acid chain; its full sequence is Hydroxyethylthiazole kinase 2 (265 aa).

Met39 serves as a coordination point for substrate. Positions 115 and 168 each coordinate ATP. Position 195 (Gly195) interacts with substrate.

This sequence belongs to the Thz kinase family. Requires Mg(2+) as cofactor.

The enzyme catalyses 5-(2-hydroxyethyl)-4-methylthiazole + ATP = 4-methyl-5-(2-phosphooxyethyl)-thiazole + ADP + H(+). Its pathway is cofactor biosynthesis; thiamine diphosphate biosynthesis; 4-methyl-5-(2-phosphoethyl)-thiazole from 5-(2-hydroxyethyl)-4-methylthiazole: step 1/1. Functionally, catalyzes the phosphorylation of the hydroxyl group of 4-methyl-5-beta-hydroxyethylthiazole (THZ). This Clostridium botulinum (strain Okra / Type B1) protein is Hydroxyethylthiazole kinase 2.